The chain runs to 351 residues: UDP-3-O-acylglucosamine N-acyltransferase (351 aa).

Residue H240 is the Proton acceptor of the active site.

It belongs to the transferase hexapeptide repeat family. LpxD subfamily. As to quaternary structure, homotrimer.

The catalysed reaction is a UDP-3-O-[(3R)-3-hydroxyacyl]-alpha-D-glucosamine + a (3R)-hydroxyacyl-[ACP] = a UDP-2-N,3-O-bis[(3R)-3-hydroxyacyl]-alpha-D-glucosamine + holo-[ACP] + H(+). It functions in the pathway bacterial outer membrane biogenesis; LPS lipid A biosynthesis. Functionally, catalyzes the N-acylation of UDP-3-O-acylglucosamine using 3-hydroxyacyl-ACP as the acyl donor. Is involved in the biosynthesis of lipid A, a phosphorylated glycolipid that anchors the lipopolysaccharide to the outer membrane of the cell. The sequence is that of UDP-3-O-acylglucosamine N-acyltransferase from Pseudomonas syringae pv. syringae (strain B728a).